A 343-amino-acid polypeptide reads, in one-letter code: Mitochondrial amidoxime-reducing component 1 (343 aa).

Over 1–25 (MSNTVFSGAVGPLRAAALSISRHRL) the chain is Mitochondrial matrix. Residues 26–44 (PLLCAAGLGLTAVASWMWW) form a helical; Signal-anchor for type II membrane protein membrane-spanning segment. Residues 45–343 (RKRQGEAEDL…DPVYRVTRKG (299 aa)) lie on the Cytoplasmic side of the membrane. The Mo-molybdopterin site is built by K69, S70, and R94. Residues 95–186 (HWLVVTEEGN…SSQPYRLVHF (92 aa)) are MOSC N-terminal region. The region spanning 181 to 339 (YRLVHFEADV…IRVGDPVYRV (159 aa)) is the MOSC domain. 5 residues coordinate Mo-molybdopterin: S215, R242, R276, C277, and Y321.

Mo-molybdopterin serves as cofactor.

The protein resides in the mitochondrion outer membrane. Its subcellular location is the membrane. The enzyme catalyses N(omega)-hydroxy-L-arginine + 2 Fe(II)-[cytochrome b5] + 2 H(+) = L-arginine + 2 Fe(III)-[cytochrome b5] + H2O. Functionally, catalyzes the reduction of N-oxygenated molecules, acting as a counterpart of cytochrome P450 and flavin-containing monooxygenases in metabolic cycles. As a component of prodrug-converting system, reduces a multitude of N-hydroxylated prodrugs particularly amidoximes, leading to increased drug bioavailability. May be involved in mitochondrial N(omega)-hydroxy-L-arginine (NOHA) reduction, regulating endogenous nitric oxide levels and biosynthesis. Postulated to cleave the N-OH bond of N-hydroxylated substrates in concert with electron transfer from NADH to cytochrome b5 reductase then to cytochrome b5, the ultimate electron donor that primes the active site for substrate reduction. This chain is Mitochondrial amidoxime-reducing component 1 (mtarc1), found in Xenopus laevis (African clawed frog).